The following is a 260-amino-acid chain: Serine/threonine-protein acetyltransferase NGR_a02610 (260 aa).

Residues H123 and E143 contribute to the active site. H123 serves as a coordination point for CoA. 180–181 (KS) provides a ligand contact to CoA. C185 is a catalytic residue.

Belongs to the acetyltransferase YopJ family.

The catalysed reaction is L-threonyl-[protein] + acetyl-CoA = O-acetyl-L-threonyl-[protein] + CoA. The enzyme catalyses L-seryl-[protein] + acetyl-CoA = O-acetyl-L-seryl-[protein] + CoA. Functionally, serine/threonine-protein acetyltransferase translocated into infected cells, which mediates acetylation of serine and threonine residues of host target proteins. The protein is Serine/threonine-protein acetyltransferase NGR_a02610 of Sinorhizobium fredii (strain NBRC 101917 / NGR234).